The sequence spans 552 residues: C-type lectin receptor-like tyrosine-protein kinase At1g52310 (552 aa).

Positions 1–27 (MELKWVSCRKQSLFLISCLALLCLASL) are cleaved as a signal peptide. Residues 28–201 (DTISCESTQN…DIKCRNCHKY (174 aa)) are Extracellular-facing. Residues Asn37, Asn59, Asn69, Asn106, Asn118, Asn137, Asn154, Asn169, and Asn180 are each glycosylated (N-linked (GlcNAc...) asparagine). One can recognise a C-type lectin domain in the interval 59–188 (NQTKCYAYFK…CNASHAFVCA (130 aa)). 2 disulfides stabilise this stretch: Cys80–Cys187 and Cys164–Cys179. The chain crosses the membrane as a helical span at residues 202–222 (LVILAVVSGLILFTTFAIILW). Residues 223-552 (LLVYKRSKKR…QQLVQPLEVK (330 aa)) lie on the Cytoplasmic side of the membrane. One can recognise a Protein kinase domain in the interval 268-546 (SEANRLAGDA…HVVHQLQQLV (279 aa)). Residues 274–282 (AGDAKTGGT) and Lys296 contribute to the ATP site. Asp394 functions as the Proton acceptor in the catalytic mechanism.

Belongs to the protein kinase superfamily. Tyr protein kinase family.

The protein localises to the cell membrane. It catalyses the reaction L-tyrosyl-[protein] + ATP = O-phospho-L-tyrosyl-[protein] + ADP + H(+). In Arabidopsis thaliana (Mouse-ear cress), this protein is C-type lectin receptor-like tyrosine-protein kinase At1g52310.